The sequence spans 600 residues: Elongation factor 4 (600 aa).

The tr-type G domain occupies Ser-5–Lys-187. GTP contacts are provided by residues Asp-17 to Thr-22 and Asn-134 to Asp-137.

It belongs to the TRAFAC class translation factor GTPase superfamily. Classic translation factor GTPase family. LepA subfamily.

It is found in the cell inner membrane. The catalysed reaction is GTP + H2O = GDP + phosphate + H(+). In terms of biological role, required for accurate and efficient protein synthesis under certain stress conditions. May act as a fidelity factor of the translation reaction, by catalyzing a one-codon backward translocation of tRNAs on improperly translocated ribosomes. Back-translocation proceeds from a post-translocation (POST) complex to a pre-translocation (PRE) complex, thus giving elongation factor G a second chance to translocate the tRNAs correctly. Binds to ribosomes in a GTP-dependent manner. This is Elongation factor 4 from Marinobacter nauticus (strain ATCC 700491 / DSM 11845 / VT8) (Marinobacter aquaeolei).